A 377-amino-acid polypeptide reads, in one-letter code: Palmitoyltransferase ZDHHC16 (377 aa).

Residues 1-77 (MRGQRSLLLG…VYWLVDNVIR (77 aa)) lie on the Cytoplasmic side of the membrane. A helical membrane pass occupies residues 78–98 (WFGVVFVVLVIVLTGSIVAIA). Residues 99-116 (YLCVLPLILRTYSVPRLC) lie on the Lumenal side of the membrane. Residues 117-137 (WHFFYSHWNLILIVFHYYQAI) traverse the membrane as a helical segment. At 138 to 198 (TTPPGYPPQG…NNCVGHYNHR (61 aa)) the chain is on the cytoplasmic side. The DHHC domain maps to 155–205 (SICKKCIYPKPARTHHCSICNRCVLKMDHHCPWLNNCVGHYNHRYFFSFCF). Cysteine 185 acts as the S-palmitoyl cysteine intermediate in catalysis. The helical transmembrane segment at 199-219 (YFFSFCFFMTLGCVYCSYGSW) threads the bilayer. At 220 to 266 (DLFREAYAAIEKMKQLDKNKLQAVANQTYHQTPPPIFSFRERMTHKS) the chain is on the lumenal side. A helical membrane pass occupies residues 267-287 (LVYLWFLCSSVALALGALTVW). Topologically, residues 288–377 (HAVLISRGET…TAHSASVMAV (90 aa)) are cytoplasmic.

This sequence belongs to the DHHC palmitoyltransferase family. As to quaternary structure, interacts with ABL1. Interacts with COPS5/JAB1.

It localises to the endoplasmic reticulum membrane. The enzyme catalyses L-cysteinyl-[protein] + hexadecanoyl-CoA = S-hexadecanoyl-L-cysteinyl-[protein] + CoA. Functionally, palmitoyl acyltransferase that mediates palmitoylation of proteins such as PLN and ZDHHC6. Required during embryonic heart development and cardiac function, possibly by mediating palmitoylation of PLN, thereby affecting PLN phosphorylation and homooligomerization. Also required for eye development. Palmitoylates ZDHHC6, affecting the quaternary assembly of ZDHHC6, its localization, stability and function. May play a role in DNA damage response. May be involved in apoptosis regulation. Involved in the proliferation of neural stem cells by regulating the FGF/ERK pathway. In Macaca fascicularis (Crab-eating macaque), this protein is Palmitoyltransferase ZDHHC16.